The chain runs to 369 residues: Flagellar P-ring protein (369 aa).

The signal sequence occupies residues methionine 1–alanine 22.

This sequence belongs to the FlgI family. The basal body constitutes a major portion of the flagellar organelle and consists of four rings (L,P,S, and M) mounted on a central rod.

Its subcellular location is the periplasm. The protein resides in the bacterial flagellum basal body. In terms of biological role, assembles around the rod to form the L-ring and probably protects the motor/basal body from shearing forces during rotation. This chain is Flagellar P-ring protein, found in Pseudomonas aeruginosa (strain LESB58).